A 167-amino-acid polypeptide reads, in one-letter code: Type IV major pilin protein PilE (167 aa).

Positions 1-7 (MNTLQKG) are cleaved as a propeptide — leader sequence. Phenylalanine 8 carries the post-translational modification N-methylphenylalanine. A helical transmembrane segment spans residues 8 to 28 (FTLIELMIVIAIVGILAAVAL). An O-linked (GlcNAc...) serine glycan is attached at serine 70. The cysteines at positions 127 and 160 are disulfide-linked.

This sequence belongs to the N-Me-Phe pilin family. As to quaternary structure, the pili are polar flexible filaments of about 5.4 nanometers diameter and 2.5 micrometers average length; they consist of only a single polypeptide chain arranged in a helical configuration of five subunits per turn in the assembled pilus.

It localises to the fimbrium. It is found in the membrane. Its function is as follows. Major component of the type IV pilus (T4P) that plays a role in cellular adherence, microcolony formation, resistance to neutrophil mediated killing, twitching motility as well as transformation. Mediates the attachment and the formation of bacterial microcolonies on host epithelial cells. Mechanistically, pili retractation induces host NF-kappa-B activation in infected cells, which is temporally associated with the formation of gonococcal microcolonies. In Neisseria gonorrhoeae, this protein is Type IV major pilin protein PilE (pilE).